The chain runs to 329 residues: GTP 3',8-cyclase (329 aa).

The Radical SAM core domain occupies Ala8–Ala234. Arg17 is a GTP binding site. 2 residues coordinate [4Fe-4S] cluster: Cys24 and Cys28. Tyr30 contributes to the S-adenosyl-L-methionine binding site. Cys31 is a binding site for [4Fe-4S] cluster. A GTP-binding site is contributed by Arg68. Gly72 is a binding site for S-adenosyl-L-methionine. Thr99 lines the GTP pocket. Ser123 is a binding site for S-adenosyl-L-methionine. Position 160 (Lys160) interacts with GTP. Residue Met194 coordinates S-adenosyl-L-methionine. Cys257 and Cys260 together coordinate [4Fe-4S] cluster. Arg262 to Arg264 lines the GTP pocket. Cys274 is a binding site for [4Fe-4S] cluster.

This sequence belongs to the radical SAM superfamily. MoaA family. As to quaternary structure, monomer and homodimer. [4Fe-4S] cluster serves as cofactor.

It catalyses the reaction GTP + AH2 + S-adenosyl-L-methionine = (8S)-3',8-cyclo-7,8-dihydroguanosine 5'-triphosphate + 5'-deoxyadenosine + L-methionine + A + H(+). Its pathway is cofactor biosynthesis; molybdopterin biosynthesis. Catalyzes the cyclization of GTP to (8S)-3',8-cyclo-7,8-dihydroguanosine 5'-triphosphate. This Escherichia coli O127:H6 (strain E2348/69 / EPEC) protein is GTP 3',8-cyclase.